Reading from the N-terminus, the 283-residue chain is Phosphatidylserine decarboxylase proenzyme (283 aa).

Active-site charge relay system; for autoendoproteolytic cleavage activity residues include aspartate 90, histidine 143, and serine 248. Catalysis depends on serine 248, which acts as the Schiff-base intermediate with substrate; via pyruvic acid; for decarboxylase activity. At serine 248 the chain carries Pyruvic acid (Ser); by autocatalysis.

The protein belongs to the phosphatidylserine decarboxylase family. PSD-B subfamily. Prokaryotic type I sub-subfamily. Heterodimer of a large membrane-associated beta subunit and a small pyruvoyl-containing alpha subunit. Pyruvate serves as cofactor. Post-translationally, is synthesized initially as an inactive proenzyme. Formation of the active enzyme involves a self-maturation process in which the active site pyruvoyl group is generated from an internal serine residue via an autocatalytic post-translational modification. Two non-identical subunits are generated from the proenzyme in this reaction, and the pyruvate is formed at the N-terminus of the alpha chain, which is derived from the carboxyl end of the proenzyme. The autoendoproteolytic cleavage occurs by a canonical serine protease mechanism, in which the side chain hydroxyl group of the serine supplies its oxygen atom to form the C-terminus of the beta chain, while the remainder of the serine residue undergoes an oxidative deamination to produce ammonia and the pyruvoyl prosthetic group on the alpha chain. During this reaction, the Ser that is part of the protease active site of the proenzyme becomes the pyruvoyl prosthetic group, which constitutes an essential element of the active site of the mature decarboxylase.

It localises to the cell membrane. It carries out the reaction a 1,2-diacyl-sn-glycero-3-phospho-L-serine + H(+) = a 1,2-diacyl-sn-glycero-3-phosphoethanolamine + CO2. The protein operates within phospholipid metabolism; phosphatidylethanolamine biosynthesis; phosphatidylethanolamine from CDP-diacylglycerol: step 2/2. In terms of biological role, catalyzes the formation of phosphatidylethanolamine (PtdEtn) from phosphatidylserine (PtdSer). In Francisella tularensis subsp. novicida (strain U112), this protein is Phosphatidylserine decarboxylase proenzyme.